The following is a 371-amino-acid chain: Putative F-box/kelch-repeat protein At3g10510 (371 aa).

The region spanning 13–61 (SVMTSIPDDVIMECIAPRVPRYNHSMLSLVSKQFRSLVASPRLYKTRSL) is the F-box domain. Kelch repeat units lie at residues 123–165 (NIFV…DMPV), 178–229 (KIYI…GPSS), and 257–305 (NECV…YIVS).

The sequence is that of Putative F-box/kelch-repeat protein At3g10510 from Arabidopsis thaliana (Mouse-ear cress).